The chain runs to 135 residues: Large ribosomal subunit protein uL16c (135 aa).

The protein belongs to the universal ribosomal protein uL16 family. In terms of assembly, part of the 50S ribosomal subunit.

Its subcellular location is the plastid. It localises to the chloroplast. In Acorus calamus var. americanus (American sweet flag), this protein is Large ribosomal subunit protein uL16c.